Consider the following 312-residue polypeptide: uncharacterized protein (312 aa).

The HTH lysR-type domain maps to 8–65 (PGLTCFEIFLAIAEAGSLGGAARELGLTQQAVSRRLASMEAQIGVRLAIRTTRGSQLT). Positions 25–45 (LGGAARELGLTQQAVSRRLAS) form a DNA-binding region, H-T-H motif.

The protein belongs to the LysR transcriptional regulatory family.

This is an uncharacterized protein from Mycobacterium tuberculosis (strain CDC 1551 / Oshkosh).